A 261-amino-acid polypeptide reads, in one-letter code: Cytochrome c oxidase subunit 3 (261 aa).

At 1 to 15 the chain is on the mitochondrial matrix side; that stretch reads MTHQTHAYHMVNPSP. Residues 16 to 34 traverse the membrane as a helical segment; the sequence is WPLTGALSALLMTSGLVMW. The Mitochondrial intermembrane portion of the chain corresponds to 35-40; sequence FHYNST. The helical transmembrane segment at 41–66 threads the bilayer; it reads LLLTLGLTTNLLTMYQWWRDIIREST. The Mitochondrial matrix segment spans residues 67–72; the sequence is FQGHHT. A helical membrane pass occupies residues 73–105; the sequence is PAVQKGLRYGMILFIISEVFFFSGFFWAFYHSS. Over 106–128 the chain is Mitochondrial intermembrane; sequence LAPTPELGGCWPPTGIHPLNPME. Residues 129 to 152 traverse the membrane as a helical segment; it reads VPLLNTSVLLASGVSITWAHHSLM. Residues 153-155 are Mitochondrial matrix-facing; it reads EGN. The helical transmembrane segment at 156 to 183 threads the bilayer; it reads RKHMLQALFITISLGIYFTLLQASEYYE. Topologically, residues 184 to 190 are mitochondrial intermembrane; the sequence is APFTISD. The helical transmembrane segment at 191–223 threads the bilayer; sequence GVYGSTFFVATGFHGLHVIIGSTFLIVCFLRQL. At 224-232 the chain is on the mitochondrial matrix side; that stretch reads KFHFTSNHH. The helical transmembrane segment at 233 to 256 threads the bilayer; that stretch reads FGFEAAAWYWHFVDVVWLFLYVSI. At 257–261 the chain is on the mitochondrial intermembrane side; the sequence is YWWGS.

This sequence belongs to the cytochrome c oxidase subunit 3 family. In terms of assembly, component of the cytochrome c oxidase (complex IV, CIV), a multisubunit enzyme composed of 14 subunits. The complex is composed of a catalytic core of 3 subunits MT-CO1, MT-CO2 and MT-CO3, encoded in the mitochondrial DNA, and 11 supernumerary subunits COX4I, COX5A, COX5B, COX6A, COX6B, COX6C, COX7A, COX7B, COX7C, COX8 and NDUFA4, which are encoded in the nuclear genome. The complex exists as a monomer or a dimer and forms supercomplexes (SCs) in the inner mitochondrial membrane with NADH-ubiquinone oxidoreductase (complex I, CI) and ubiquinol-cytochrome c oxidoreductase (cytochrome b-c1 complex, complex III, CIII), resulting in different assemblies (supercomplex SCI(1)III(2)IV(1) and megacomplex MCI(2)III(2)IV(2)).

Its subcellular location is the mitochondrion inner membrane. The catalysed reaction is 4 Fe(II)-[cytochrome c] + O2 + 8 H(+)(in) = 4 Fe(III)-[cytochrome c] + 2 H2O + 4 H(+)(out). In terms of biological role, component of the cytochrome c oxidase, the last enzyme in the mitochondrial electron transport chain which drives oxidative phosphorylation. The respiratory chain contains 3 multisubunit complexes succinate dehydrogenase (complex II, CII), ubiquinol-cytochrome c oxidoreductase (cytochrome b-c1 complex, complex III, CIII) and cytochrome c oxidase (complex IV, CIV), that cooperate to transfer electrons derived from NADH and succinate to molecular oxygen, creating an electrochemical gradient over the inner membrane that drives transmembrane transport and the ATP synthase. Cytochrome c oxidase is the component of the respiratory chain that catalyzes the reduction of oxygen to water. Electrons originating from reduced cytochrome c in the intermembrane space (IMS) are transferred via the dinuclear copper A center (CU(A)) of subunit 2 and heme A of subunit 1 to the active site in subunit 1, a binuclear center (BNC) formed by heme A3 and copper B (CU(B)). The BNC reduces molecular oxygen to 2 water molecules using 4 electrons from cytochrome c in the IMS and 4 protons from the mitochondrial matrix. In Rhinoceros unicornis (Greater Indian rhinoceros), this protein is Cytochrome c oxidase subunit 3 (MT-CO3).